We begin with the raw amino-acid sequence, 416 residues long: Geranyl diphosphate synthase (416 aa).

2 residues coordinate Mg(2+): Asp157 and Asp161. Residues 157–161 (DDIMD) carry the DDXXD motif motif.

It belongs to the FPP/GGPP synthase family. Requires Mg(2+) as cofactor. In terms of tissue distribution, specifically expressed in the anterior midgut of male beetles, the site of aggregation pheromone biosynthesis.

It carries out the reaction isopentenyl diphosphate + dimethylallyl diphosphate = (2E)-geranyl diphosphate + diphosphate. The protein operates within pheromone biosynthesis. Geranyl diphosphate synthase involved in pheromone biosynthesis. The sequence is that of Geranyl diphosphate synthase from Ips pini (Pine engraver beetle).